The sequence spans 253 residues: Coenzyme F420:L-glutamate ligase (253 aa).

GTP contacts are provided by residues 9 to 12 (LPEI), 38 to 39 (ST), and lysine 43. Aspartate 113 serves as a coordination point for a divalent metal cation. Asparagine 116 lines the GTP pocket. Residues aspartate 150, threonine 151, and glutamate 208 each contribute to the a divalent metal cation site. Position 206-213 (206-213 (SGEGDDGT)) interacts with GTP.

This sequence belongs to the CofE family. In terms of assembly, homodimer. Requires Mg(2+) as cofactor. It depends on Mn(2+) as a cofactor. K(+) is required as a cofactor.

It catalyses the reaction oxidized coenzyme F420-0 + GTP + L-glutamate = oxidized coenzyme F420-1 + GDP + phosphate + H(+). The enzyme catalyses oxidized coenzyme F420-1 + GTP + L-glutamate = oxidized coenzyme F420-2 + GDP + phosphate + H(+). The protein operates within cofactor biosynthesis; coenzyme F420 biosynthesis. Functionally, catalyzes the GTP-dependent successive addition of two or more gamma-linked L-glutamates to the L-lactyl phosphodiester of 7,8-didemethyl-8-hydroxy-5-deazariboflavin (F420-0) to form coenzyme F420-0-glutamyl-glutamate (F420-2) or polyglutamated F420 derivatives. In Halobacterium salinarum (strain ATCC 29341 / DSM 671 / R1), this protein is Coenzyme F420:L-glutamate ligase.